The primary structure comprises 235 residues: RNA polymerase sigma-E factor (235 aa).

The Polymerase core binding signature appears at 82–95; the sequence is DLISVGTIGLIKAV. The segment at residues 202–221 is a DNA-binding region (H-T-H motif); it reads QKEVADMLGISQSYISRLEK.

This sequence belongs to the sigma-70 factor family.

In terms of biological role, sigma factors are initiation factors that promote the attachment of RNA polymerase to specific initiation sites and are then released. This sigma factor is responsible for the expression of sporulation specific genes. This Clostridium acetobutylicum (strain ATCC 824 / DSM 792 / JCM 1419 / IAM 19013 / LMG 5710 / NBRC 13948 / NRRL B-527 / VKM B-1787 / 2291 / W) protein is RNA polymerase sigma-E factor (sigE).